We begin with the raw amino-acid sequence, 2335 residues long: Pre-mRNA-processing-splicing factor 8 (2335 aa).

Residue alanine 2 is modified to N-acetylalanine. Residues 812–1303 (TTVHWLESRR…KIQTRIKIGL (492 aa)) are reverse transcriptase homology domain. Residues serine 859 and serine 1358 each carry the phosphoserine modification. Residues 1304 to 1577 (NSKMPSRFPP…TLKISLIQIF (274 aa)) form a linker region. N6,N6-dimethyllysine is present on lysine 1425. N6-acetyllysine is present on lysine 1463. Residues 1513-1526 (MKWKKLTNAQRSGL) are important for branch point selection. Positions 1581–1752 (LWQKIHESIV…LRERIRKGLQ (172 aa)) are restriction endonuclease homology domain. Positions 1669 to 2034 (GDYDSHDIER…QIAEIEKQTK (366 aa)) are involved in interaction with pre-mRNA 5' splice site. The RNase H homology domain stretch occupies residues 1767–2020 (NYGELFSNQI…ILGMEISAPS (254 aa)). Residues 2103-2234 (TYILPKNVLK…LTAYKLTPSG (132 aa)) enclose the MPN domain. The segment at 2301-2335 (PKEFYHEVHRPSHFLNFALLQEGEVYSADREDLYA) is required for interaction with EFTUD2 and SNRNP200.

As to quaternary structure, part of the U5 snRNP complex. Component of the U4/U6-U5 tri-snRNP complex composed of the U4, U6 and U5 snRNAs and at least PRPF3, PRPF4, PRPF6, PRPF8, PRPF31, SNRNP200, TXNL4A, SNRNP40, DDX23, CD2BP2, PPIH, SNU13, EFTUD2, SART1 and USP39. Component of the U5.U4atac/U6atac snRNP complexes in U12-dependent spliceosomes. Within the minor spliceosome, which acts on U12-type introns, interacts with PPIL2 and RBM48. Core component of U2-type precatalytic, catalytic and postcatalytic spliceosomal complexes. Found in a mRNA splicing-dependent exon junction complex (EJC) with SRRM1. Interacts with U5 snRNP proteins SNRP116 and SNRNP40. Interacts with EFTUD2. Interacts (via the MPN (JAB/Mov34) domain) with PRPF3 ('Lys-63'-linked polyubiquitinated); may stabilize the U4/U6-U5 tri-snRNP complex. Interacts (via RNase H homology domain) with AAR2. Interacts with RPAP3 and URI1 in a ZNHIT2-dependent manner. Interacts with C9orf78. Interacts with SNRNP200; the interaction is direct. Interacts with TSSC4; the interaction is direct. As to expression, widely expressed.

It is found in the nucleus. It localises to the nucleus speckle. Plays a role in pre-mRNA splicing as core component of precatalytic, catalytic and postcatalytic spliceosomal complexes, both of the predominant U2-type spliceosome and the minor U12-type spliceosome. Functions as a scaffold that mediates the ordered assembly of spliceosomal proteins and snRNAs. Required for the assembly of the U4/U6-U5 tri-snRNP complex, a building block of the spliceosome. Functions as a scaffold that positions spliceosomal U2, U5 and U6 snRNAs at splice sites on pre-mRNA substrates, so that splicing can occur. Interacts with both the 5' and the 3' splice site. The polypeptide is Pre-mRNA-processing-splicing factor 8 (PRPF8) (Homo sapiens (Human)).